Consider the following 413-residue polypeptide: Monacolin J acid methylbutanoyltransferase (413 aa).

Position 73 (R73) interacts with monacolin J. The active-site Acyl-ester intermediate is the S76. Residues R173, Y188, and Y258 each contribute to the monacolin J site. Residue G366 coordinates 2-methylbutanoate. Monacolin J-binding residues include E388 and W390.

Belongs to the class-A beta-lactamase family. As to quaternary structure, interacts with LovF.

It catalyses the reaction monacolin J carboxylate + (S)-2-methylbutanoyl-[2-methylbutanoate polyketide synthase] = lovastatin carboxylate + holo-[2-methylbutanoate polyketide synthase]. The protein operates within polyketide biosynthesis; lovastatin biosynthesis. Its function is as follows. Monacolin J acid methylbutanoyltransferase; part of the gene cluster that mediates the biosynthesis of lovastatin (also known as mevinolin, mevacor or monacolin K), a hypolipidemic inhibitor of (3S)-hydroxymethylglutaryl-coenzyme A (HMG-CoA) reductase (HMGR). The first step in the biosynthesis of lovastatin is the production of dihydromonacolin L acid by the lovastatin nonaketide synthase lovB and the trans-acting enoyl reductase lovC via condensation of one acetyl-CoA unit and 8 malonyl-CoA units. Dihydromonacolin L acid is released from lovB by the thioesterase lovG. Next, dihydromonacolin L acid is oxidized by the dihydromonacolin L monooxygenase lovA twice to form monacolin J acid. The 2-methylbutyrate moiety of lovastatin is synthesized by the lovastatin diketide synthase lovF via condensation of one acetyl-CoA unit and one malonyl-CoA unit. Finally, the covalent attachment of this moiety to monacolin J acid is catalyzed by the transesterase lovD to yield lovastatin. LovD has broad substrate specificity and can also convert monacolin J to simvastatin using alpha-dimethylbutanoyl-S-methyl-3-mercaptopropionate (DMB-S-MMP) as the thioester acyl donor, and can also catalyze the reverse reaction and function as hydrolase in vitro. LovD has much higher activity with LovF-bound 2-methylbutanoate than with free diketide substrates. In Aspergillus terreus, this protein is Monacolin J acid methylbutanoyltransferase.